Consider the following 495-residue polypeptide: UPF0371 protein CE2832 (495 aa).

It belongs to the UPF0371 family.

In Corynebacterium efficiens (strain DSM 44549 / YS-314 / AJ 12310 / JCM 11189 / NBRC 100395), this protein is UPF0371 protein CE2832.